The chain runs to 180 residues: Chorion protein S19 (180 aa).

The N-terminal stretch at 1–21 (MNTFATLAVLFCACLIGNCHG) is a signal peptide.

This sequence belongs to the chorion protein S19 family.

It localises to the secreted. In terms of biological role, chorion membrane (egg shell) protein; plays a role in protecting the egg from the environment. In Drosophila subobscura (Fruit fly), this protein is Chorion protein S19 (Cp19).